A 391-amino-acid polypeptide reads, in one-letter code: Homocysteine-responsive endoplasmic reticulum-resident ubiquitin-like domain member 1 protein (391 aa).

N-acetylmethionine is present on methionine 1. Topologically, residues 1–263 are cytoplasmic; sequence MEPEPQPEPV…VEEDDEINRD (263 aa). One can recognise a Ubiquitin-like domain in the interval 10-72; the sequence is VTLLVKSPNQ…LLDHQCLQDL (63 aa). Residues 90–126 form a disordered region; the sequence is NPSKMPETSTKGAESTEQPDNSNQTQHPGDSSSDGLR. Residues 95-124 show a composition bias toward polar residues; the sequence is PETSTKGAESTEQPDNSNQTQHPGDSSSDG. Residues 115–200 form an interaction with UBQLN1 region; it reads QHPGDSSSDG…ASGTFVPTPS (86 aa). Serine 135 carries the phosphoserine modification. Residues 264–284 traverse the membrane as a helical segment; the sequence is WLDWTYSAATFSVFLSILYFY. The Lumenal segment spans residues 285 to 289; sequence SSLSR. The helical transmembrane segment at 290–310 threads the bilayer; sequence FLMVMGATVVMYLHHVGWFPF. The Cytoplasmic segment spans residues 311–391; sequence RQRPVQNFPD…LPEGPPALAN (81 aa). Positions 317–361 are disordered; sequence NFPDDGGPRDAANQDPNNNLQGGMDPEMEDPNRLPPDREVLDPEH. Over residues 346–361 the composition is skewed to basic and acidic residues; it reads DPNRLPPDREVLDPEH.

As to quaternary structure, interacts with PSEN1 and PSEN2. Interacts with UBXN6. Interacts with UBQLN1, UBQLN2 and UBQLN4. Component of the HRD1 complex, which comprises at least SYNV1/HRD1, FAM8A1, HERPUD1/HERP, OS9, SEL1L and UBE2J1. FAM8A1 binding to SYNV1 may promote recruitment of HERPUD1 to the HRD1 complex.

It is found in the endoplasmic reticulum membrane. Functionally, component of the endoplasmic reticulum quality control (ERQC) system also called ER-associated degradation (ERAD) involved in ubiquitin-dependent degradation of misfolded endoplasmic reticulum proteins. Binds to ubiquilins and this interaction is required for efficient degradation of CD3D via the ERAD pathway. This Mus musculus (Mouse) protein is Homocysteine-responsive endoplasmic reticulum-resident ubiquitin-like domain member 1 protein (Herpud1).